Consider the following 86-residue polypeptide: Acyl carrier protein (86 aa).

Residues 2 to 82 (ATVFERVKKV…AVVDYLKSKG (81 aa)) enclose the Carrier domain. At Ser-37 the chain carries O-(pantetheine 4'-phosphoryl)serine.

Belongs to the acyl carrier protein (ACP) family. Post-translationally, 4'-phosphopantetheine is transferred from CoA to a specific serine of apo-ACP by AcpS. This modification is essential for activity because fatty acids are bound in thioester linkage to the sulfhydryl of the prosthetic group.

Its subcellular location is the cytoplasm. Its pathway is lipid metabolism; fatty acid biosynthesis. Its function is as follows. Carrier of the growing fatty acid chain in fatty acid biosynthesis. In Dehalococcoides mccartyi (strain ATCC BAA-2266 / KCTC 15142 / 195) (Dehalococcoides ethenogenes (strain 195)), this protein is Acyl carrier protein.